A 188-amino-acid polypeptide reads, in one-letter code: Elongation factor P (188 aa).

Lys-34 carries the post-translational modification N6-(3,6-diaminohexanoyl)-5-hydroxylysine.

The protein belongs to the elongation factor P family. May be beta-lysylated on the epsilon-amino group of Lys-34 by the combined action of EpmA and EpmB, and then hydroxylated on the C5 position of the same residue by EpmC (if this protein is present). Lysylation is critical for the stimulatory effect of EF-P on peptide-bond formation. The lysylation moiety may extend toward the peptidyltransferase center and stabilize the terminal 3-CCA end of the tRNA. Hydroxylation of the C5 position on Lys-34 may allow additional potential stabilizing hydrogen-bond interactions with the P-tRNA.

It localises to the cytoplasm. It functions in the pathway protein biosynthesis; polypeptide chain elongation. Functionally, involved in peptide bond synthesis. Alleviates ribosome stalling that occurs when 3 or more consecutive Pro residues or the sequence PPG is present in a protein, possibly by augmenting the peptidyl transferase activity of the ribosome. Modification of Lys-34 is required for alleviation. In Coxiella burnetii (strain CbuG_Q212) (Coxiella burnetii (strain Q212)), this protein is Elongation factor P.